The primary structure comprises 1135 residues: Retinoblastoma-like protein 2 (1135 aa).

Residues 1–43 (MASGGNQSPPPPPAAAASSEEEEEDGDAADRAQPAGSPSHQIQ) are disordered. A Phosphoserine modification is found at serine 410. Threonine 414 bears the Phosphothreonine mark. The tract at residues 414 to 613 (TPVSTAAHSL…DRIRDNENRV (200 aa)) is domain A. Residues 414-1021 (TPVSTAAHSL…QAFAMKYSQA (608 aa)) form a pocket; binds E1A region. O-linked (GlcNAc) serine glycosylation occurs at serine 417. The tract at residues 614-824 (PTCEEVMPPQ…PGQPLTSSSI (211 aa)) is spacer. Serine 636 bears the Phosphoserine mark. Threonine 639 is subject to Phosphothreonine. Phosphoserine occurs at positions 659, 669, 684, 942, 946, 960, 965, and 967. 4 stretches are compositionally biased toward polar residues: residues 661–674 (TTLY…TVST), 683–692 (DSPSEGSTSG), 935–950 (SGSS…PTEL), and 958–969 (DSSPVMRSNSTL). Disordered stretches follow at residues 661 to 698 (TTLY…PPQP) and 930 to 994 (GKRR…VEEE). A domain B region spans residues 825–1021 (RPRKTSSLAL…QAFAMKYSQA (197 aa)). Threonine 968 is modified (phosphothreonine). Residues 971 to 981 (VPQPSSAPPTP) are compositionally biased toward pro residues. Serine 975 and serine 976 each carry phosphoserine. Position 980 is a phosphothreonine (threonine 980). Serine 1031, serine 1064, serine 1076, and serine 1108 each carry phosphoserine.

Belongs to the retinoblastoma protein (RB) family. In terms of assembly, interacts with AATF and RINT1. Component of the DREAM complex (also named LINC complex) at least composed of E2F4, E2F5, LIN9, LIN37, LIN52, LIN54, MYBL1, MYBL2, RBL1, RBL2, RBBP4, TFDP1 and TFDP2. The complex exists in quiescent cells where it represses cell cycle-dependent genes. It dissociates in S phase when LIN9, LIN37, LIN52 and LIN54 form a subcomplex that binds to MYBL2. Interacts with USP4. Interacts with KMT5B, KMT5C and USP4. Interacts with PML. Interacts with RBBP9. Interacts with CD53. During G0 and early G1 phase of the cell cycle, phosphorylated on Ser-636 and on 5 sites within the domain B. Phosphorylation on Ser-669 in G1 leads to its ubiquitin-dependent proteolysis.

It is found in the nucleus. Functionally, key regulator of entry into cell division. Directly involved in heterochromatin formation by maintaining overall chromatin structure and, in particular, that of constitutive heterochromatin by stabilizing histone methylation. Recruits and targets histone methyltransferases KMT5B and KMT5C, leading to epigenetic transcriptional repression. Controls histone H4 'Lys-20' trimethylation. Probably acts as a transcription repressor by recruiting chromatin-modifying enzymes to promoters. Potent inhibitor of E2F-mediated trans-activation, associates preferentially with E2F5. Binds to cyclins A and E. Binds to and may be involved in the transforming capacity of the adenovirus E1A protein. May act as a tumor suppressor. This chain is Retinoblastoma-like protein 2 (Rbl2), found in Mus musculus (Mouse).